We begin with the raw amino-acid sequence, 508 residues long: Photosystem II CP47 reaction center protein (508 aa).

Transmembrane regions (helical) follow at residues 21–36, 101–115, 140–156, 203–218, 237–252, and 457–472; these read AVHL…WAGS, IILS…IWHW, GIHL…FGAF, IAAG…FHLS, VLSS…AFVV, and NFAL…HGSR.

It belongs to the PsbB/PsbC family. PsbB subfamily. PSII is composed of 1 copy each of membrane proteins PsbA, PsbB, PsbC, PsbD, PsbE, PsbF, PsbH, PsbI, PsbJ, PsbK, PsbL, PsbM, PsbT, PsbX, PsbY, PsbZ, Psb30/Ycf12, at least 3 peripheral proteins of the oxygen-evolving complex and a large number of cofactors. It forms dimeric complexes. The cofactor is Binds multiple chlorophylls. PSII binds additional chlorophylls, carotenoids and specific lipids..

The protein localises to the plastid. The protein resides in the chloroplast thylakoid membrane. Functionally, one of the components of the core complex of photosystem II (PSII). It binds chlorophyll and helps catalyze the primary light-induced photochemical processes of PSII. PSII is a light-driven water:plastoquinone oxidoreductase, using light energy to abstract electrons from H(2)O, generating O(2) and a proton gradient subsequently used for ATP formation. This chain is Photosystem II CP47 reaction center protein, found in Staurastrum punctulatum (Green alga).